The following is a 430-amino-acid chain: 3-phosphoshikimate 1-carboxyvinyltransferase (430 aa).

Residues lysine 21, serine 22, and arginine 26 each coordinate 3-phosphoshikimate. Residue lysine 21 participates in phosphoenolpyruvate binding. Phosphoenolpyruvate contacts are provided by glycine 94 and arginine 122. 3-phosphoshikimate is bound by residues serine 167, glutamine 169, aspartate 317, and lysine 344. Position 169 (glutamine 169) interacts with phosphoenolpyruvate. Catalysis depends on aspartate 317, which acts as the Proton acceptor. Arginine 348 and arginine 390 together coordinate phosphoenolpyruvate.

The protein belongs to the EPSP synthase family. Monomer.

The protein localises to the cytoplasm. It catalyses the reaction 3-phosphoshikimate + phosphoenolpyruvate = 5-O-(1-carboxyvinyl)-3-phosphoshikimate + phosphate. The protein operates within metabolic intermediate biosynthesis; chorismate biosynthesis; chorismate from D-erythrose 4-phosphate and phosphoenolpyruvate: step 6/7. In terms of biological role, catalyzes the transfer of the enolpyruvyl moiety of phosphoenolpyruvate (PEP) to the 5-hydroxyl of shikimate-3-phosphate (S3P) to produce enolpyruvyl shikimate-3-phosphate and inorganic phosphate. This chain is 3-phosphoshikimate 1-carboxyvinyltransferase, found in Thermodesulfovibrio yellowstonii (strain ATCC 51303 / DSM 11347 / YP87).